Reading from the N-terminus, the 115-residue chain is SOSS complex subunit C homolog (115 aa).

It belongs to the SOSS-C family.

This Drosophila mojavensis (Fruit fly) protein is SOSS complex subunit C homolog.